A 608-amino-acid chain; its full sequence is Endo-1,4-beta-xylanase C (608 aa).

A signal peptide spans 1–25 (MKTFSVTKSSVVFAMALGMASTAFA). Residues 40–250 (TITSNQTGKI…VNGEVRGGHM (211 aa)) enclose the GH11 1 domain. Glu-142 serves as the catalytic Nucleophile. The active-site Proton donor is the Glu-237. Residues 263–294 (SDPVSSSSVKSSSSTDAPKSSSSKGNGNVSGK) are compositionally biased toward low complexity. The disordered stretch occupies residues 263 to 296 (SDPVSSSSVKSSSSTDAPKSSSSKGNGNVSGKID). A GH11 2 domain is found at 316–514 (NSSVTGNVGS…GSGSFDVTYF (199 aa)). Residue Glu-409 is the Nucleophile of the active site. Residue Glu-501 is the Proton donor of the active site. A disordered region spans residues 520–539 (AHPLAQPEPESSSSEAKVES). Positions 527 to 539 (EPESSSSEAKVES) are enriched in low complexity.

Belongs to the glycosyl hydrolase 11 (cellulase G) family.

It catalyses the reaction Endohydrolysis of (1-&gt;4)-beta-D-xylosidic linkages in xylans.. It functions in the pathway glycan degradation; xylan degradation. Functionally, cleaves xylans with the production of xylose, xylobiose and xylo-oligosaccharides. The polypeptide is Endo-1,4-beta-xylanase C (xynC) (Fibrobacter succinogenes (strain ATCC 19169 / S85)).